Consider the following 426-residue polypeptide: Formyl-CoA:oxalate CoA-transferase (426 aa).

CoA-binding positions include 17–18 (QS), R38, 72–75 (LDTK), 96–98 (NFG), R104, and 136–139 (KVYE). D168 acts as the Nucleophile in catalysis. 247-249 (GGQ) contacts substrate.

Belongs to the CoA-transferase III family. Frc subfamily. In terms of assembly, homodimer.

It carries out the reaction formyl-CoA + oxalate = oxalyl-CoA + formate. It participates in metabolic intermediate degradation; oxalate degradation; CO(2) and formate from oxalate: step 1/2. In terms of biological role, involved in the catabolism of oxalate and in the adapatation to low pH via the induction of the oxalate-dependent acid tolerance response (ATR). Catalyzes the transfer of the CoA moiety from formyl-CoA to oxalate. The sequence is that of Formyl-CoA:oxalate CoA-transferase from Rhodopseudomonas palustris (strain BisB18).